The chain runs to 176 residues: Large ribosomal subunit protein bL17 (176 aa).

The disordered stretch occupies residues 124–176 (AAPKAARQDRSKRVKGSRKTEASAAKAAPAAQAAPELPAESDAPAAEAAPTEE). The segment covering 145–176 (ASAAKAAPAAQAAPELPAESDAPAAEAAPTEE) has biased composition (low complexity).

Belongs to the bacterial ribosomal protein bL17 family. In terms of assembly, part of the 50S ribosomal subunit. Contacts protein L32.

This is Large ribosomal subunit protein bL17 from Chlorobium phaeovibrioides (strain DSM 265 / 1930) (Prosthecochloris vibrioformis (strain DSM 265)).